The following is a 1441-amino-acid chain: Probable ubiquitin-conjugating enzyme E2 R521 (1441 aa).

A helical membrane pass occupies residues 20 to 40; the sequence is YIHHIIINYITNSILYFFLIM. A coiled-coil region spans residues 63 to 89; it reads NQSKLVNTLDIIKDEINKWEEKNTDKD. The span at 180–199 shows a compositional bias: basic and acidic residues; that stretch reads VSKDKMKDKSESNSEHEQES. 2 disordered regions span residues 180–207 and 283–305; these read VSKD…SNEI and IFGK…MSKV. Residues 286 to 303 show a composition bias toward low complexity; it reads KSKNSGPSSSKTSISSMS. Positions 340-368 form a coiled coil; sequence TTNEDNNDLDNLINEVERLVQETKDQETK. Residues 505–538 are compositionally biased toward low complexity; it reads TVEPVQEVAEEPVQQEVAEEPVQQEVAEEPVQQE. Disordered regions lie at residues 505–554 and 577–605; these read TVEP…PVQK and NDFS…NNLG. The span at 539-549 shows a compositional bias: acidic residues; that stretch reads VAEEPVQEVAE. A UBC core domain is found at 1217-1380; that stretch reads AISRELLSHS…VRFNCMKWAM (164 aa). The Glycyl thioester intermediate role is filled by Cys1306.

This sequence belongs to the ubiquitin-conjugating enzyme family.

Its subcellular location is the membrane. It carries out the reaction S-ubiquitinyl-[E1 ubiquitin-activating enzyme]-L-cysteine + [E2 ubiquitin-conjugating enzyme]-L-cysteine = [E1 ubiquitin-activating enzyme]-L-cysteine + S-ubiquitinyl-[E2 ubiquitin-conjugating enzyme]-L-cysteine.. Its pathway is protein modification; protein ubiquitination. In terms of biological role, catalyzes the covalent attachment of ubiquitin to other proteins. This is Probable ubiquitin-conjugating enzyme E2 R521 from Acanthamoeba polyphaga (Amoeba).